The following is a 125-amino-acid chain: Desulfoferrodoxin (125 aa).

Residues H49, H69, H75, C115, and H118 each contribute to the Fe cation site.

Belongs to the desulfoferrodoxin family. It depends on Cu(2+) as a cofactor.

The catalysed reaction is reduced [rubredoxin] + superoxide + 2 H(+) = oxidized [rubredoxin] + H2O2. Its function is as follows. Catalyzes the reduction of superoxide to hydrogen peroxide, using electrons from NADH and NADH:rubredoxin oxidoreductase (NROR) and rubredoxin (Rd) as electron transport intermediaries between NADH and Dfx. Is a key factor in the superoxide reductase dependent part of a pathway for detoxification of reactive oxygen species (ROS) in C.acetobutylicum, an obligate anaerobic bacterium. The chain is Desulfoferrodoxin (dfx) from Clostridium acetobutylicum (strain ATCC 824 / DSM 792 / JCM 1419 / IAM 19013 / LMG 5710 / NBRC 13948 / NRRL B-527 / VKM B-1787 / 2291 / W).